Here is a 306-residue protein sequence, read N- to C-terminus: Elongation factor Ts (306 aa).

The involved in Mg(2+) ion dislocation from EF-Tu stretch occupies residues 81 to 84 (TDFV).

Belongs to the EF-Ts family.

It is found in the cytoplasm. Functionally, associates with the EF-Tu.GDP complex and induces the exchange of GDP to GTP. It remains bound to the aminoacyl-tRNA.EF-Tu.GTP complex up to the GTP hydrolysis stage on the ribosome. This Polaromonas naphthalenivorans (strain CJ2) protein is Elongation factor Ts.